We begin with the raw amino-acid sequence, 206 residues long: Large ribosomal subunit protein uL4 (206 aa).

Belongs to the universal ribosomal protein uL4 family. In terms of assembly, part of the 50S ribosomal subunit.

Functionally, one of the primary rRNA binding proteins, this protein initially binds near the 5'-end of the 23S rRNA. It is important during the early stages of 50S assembly. It makes multiple contacts with different domains of the 23S rRNA in the assembled 50S subunit and ribosome. Its function is as follows. Forms part of the polypeptide exit tunnel. The polypeptide is Large ribosomal subunit protein uL4 (Rhodopseudomonas palustris (strain BisB5)).